The sequence spans 92 residues: Large ribosomal subunit protein bL28 (92 aa).

It belongs to the bacterial ribosomal protein bL28 family.

In Borreliella burgdorferi (strain ATCC 35210 / DSM 4680 / CIP 102532 / B31) (Borrelia burgdorferi), this protein is Large ribosomal subunit protein bL28.